Reading from the N-terminus, the 249-residue chain is Methionine aminopeptidase 2 (249 aa).

Histidine 76 lines the substrate pocket. A divalent metal cation is bound by residues aspartate 94, aspartate 105, and histidine 168. Histidine 175 serves as a coordination point for substrate. A divalent metal cation-binding residues include glutamate 202 and glutamate 233.

In terms of assembly, monomer. Co(2+) is required as a cofactor. The cofactor is Zn(2+). It depends on Mn(2+) as a cofactor. Requires Fe(2+) as cofactor.

Its subcellular location is the cytoplasm. It catalyses the reaction Release of N-terminal amino acids, preferentially methionine, from peptides and arylamides.. Functionally, removes the N-terminal methionine from nascent proteins. The N-terminal methionine is often cleaved when the second residue in the primary sequence is small and uncharged (Met-Ala-, Cys, Gly, Pro, Ser, Thr, or Val). Requires deformylation of the N(alpha)-formylated initiator methionine before it can be hydrolyzed. This Bacillus subtilis (strain 168) protein is Methionine aminopeptidase 2.